The chain runs to 250 residues: Deoxynucleoside-5'-monophosphate kinase (250 aa).

G14, D16, and T17 together coordinate ATP. Residues V44, K65, R130, G137, T138, W150, D170, R172, E176, and S210 each coordinate dGMP.

The protein belongs to the dNMP kinase family. As to quaternary structure, monomer.

It carries out the reaction a 2'-deoxyribonucleoside 5'-phosphate + ATP = a 2'-deoxyribonucleoside 5'-diphosphate + ADP. Its function is as follows. Allows the synthesis of deoxyribonucleoside triphosphates necessary for the rapid viral DNA replication. Phosphorylates all four dNMPs. The enzyme had the highest activity with dAMP and had about 30% less activity with dTMP and dGMP, respectively. The lowest activity was observed with dCMP as the substrate (about 35% of that with dAMP). This is Deoxynucleoside-5'-monophosphate kinase from Escherichia coli (Enterobacteria phage T5).